The following is a 484-amino-acid chain: tRNA-2-methylthio-N(6)-dimethylallyladenosine synthase (484 aa).

Positions 36–153 (GKLYIKTHGC…LPELIRARRE (118 aa)) constitute an MTTase N-terminal domain. [4Fe-4S] cluster-binding residues include Cys-45, Cys-82, Cys-116, Cys-190, Cys-194, and Cys-197. A Radical SAM core domain is found at 176–415 (RAEGPSAFVS…HINAHAASIS (240 aa)). Positions 416–479 (QSMVGSVQRV…SNSLRGRIQL (64 aa)) constitute a TRAM domain. Residues 428–450 (EGPSRRDPNELTGKSENMRPVNF) are disordered.

Belongs to the methylthiotransferase family. MiaB subfamily. In terms of assembly, monomer. [4Fe-4S] cluster serves as cofactor.

It is found in the cytoplasm. It catalyses the reaction N(6)-dimethylallyladenosine(37) in tRNA + (sulfur carrier)-SH + AH2 + 2 S-adenosyl-L-methionine = 2-methylsulfanyl-N(6)-dimethylallyladenosine(37) in tRNA + (sulfur carrier)-H + 5'-deoxyadenosine + L-methionine + A + S-adenosyl-L-homocysteine + 2 H(+). Catalyzes the methylthiolation of N6-(dimethylallyl)adenosine (i(6)A), leading to the formation of 2-methylthio-N6-(dimethylallyl)adenosine (ms(2)i(6)A) at position 37 in tRNAs that read codons beginning with uridine. This Xanthomonas euvesicatoria pv. vesicatoria (strain 85-10) (Xanthomonas campestris pv. vesicatoria) protein is tRNA-2-methylthio-N(6)-dimethylallyladenosine synthase.